We begin with the raw amino-acid sequence, 429 residues long: 46 kDa membrane protein (429 aa).

The next 9 membrane-spanning stretches (helical) occupy residues 26–46, 51–71, 99–119, 173–193, 224–244, 279–299, 315–335, 360–380, and 407–427; these read AALTGAAIVVTLPIINSEDVF, TGIDWEVIFLLLSMMIIVSVL, LVLVMALGSALLDNVTTVLLI, FLIHLTPIVIIVTVVLSALLP, LLIKCGVVLLLVFVAFIAHPV, TLLFFAGLFIMVGALVKTDVV, LLTVVLTLGVSTLVSSIIDNI, ILWWALALGADFGGNLTAVGA, and IAVTVISIALAGIYLWLRYLV.

It belongs to the CitM (TC 2.A.11) transporter family.

It localises to the cell membrane. The polypeptide is 46 kDa membrane protein (ag45) (Mycobacterium leprae (strain TN)).